The primary structure comprises 938 residues: MEVDPSSSLPGAGEGGGGGIGGGGGDLWPFDSLTTSLLFSSVSASPQPLPASSSSWLTPPSPLWLFDERQLLPLDMGAPAAPATAPPAEAAAVVEEVHRTRSGNSDTTSKRVDQINSKWQFHLSIDDNTDSSCLFKERLTQALRYFKESTDQHLLVQVWAPVKSGDRYVLTTSGQPFVLDQQSIGLLQYRAVSMMYMFSVDGENAGELGLPGRVYKQKVPEWTPNVQYYSSTEYPRLNHAISYNVHGTVALPVFDPSVQNCIAVVELIMTSKKINYAGEVDKVCKALEAVNLKSTEILDHPNVQICNEGRQSALVEILEILTVVCEEHKLPLAQTWVPCKYRSVLAHGGGVKKSCLSFDGSCMGEVCMSTSDVAFHVIDAHMWGFRDACVEHHLQKGQGVSGKAFIYRRPCFSKDISQFCKLEYPLVHYARMFGLAGCFAICLQSMYTGDDDYILEFFLPPNCRNEDDQNALLESILARMKKCLRTLKVVGNGDTNEVCLQISNVLIIETEDLKTNVHFENSEGCFRESPESNGSQRVHEVDNDGNKVSIMSERHLLADDNSQNNGASVGRPNGSGASDSLHKSNKPPERRRGKAEKTISLDVLQQYFSGSLKNAAKSLGVCPTTMKRICRQHGISRWPSRKINKVNRSLSKLKQVIESVQGSDAAFNLTSITGPLPIPVGPSSDSQNLEKASPNKVAELSNLAVEGDRDSSLQKPIENDNLAILMSQQGFIDANNNLQLEADKASHSRSSSGEGSINSRTSEASCHGSPANQTFVCKPIASTFAEPQLIPEAFTKEPFQEPALPLSRMLIEDSGSSKDLKNLFTSAVDQPFLARSSNLALMQNSGTVTIKASFKEDIVRFRFPCSGSVTALKDEVAKRLRMDVGMFDIKYLDDDHEWVKLACNADLEECMEISGSHVIRLLVSDVAAHLGSSCGSSG.

Disordered regions lie at residues 1-26 and 557-597; these read MEVD…GGGD and LADD…KAEK. The segment covering 12–26 has biased composition (gly residues); sequence AGEGGGGGIGGGGGD. Residues 580–597 are compositionally biased toward basic and acidic residues; that stretch reads SLHKSNKPPERRRGKAEK. One can recognise an RWP-RK domain in the interval 585–666; that stretch reads NKPPERRRGK…IESVQGSDAA (82 aa). A coiled-coil region spans residues 640–662; it reads SRKINKVNRSLSKLKQVIESVQG. A disordered region spans residues 743–769; it reads DKASHSRSSSGEGSINSRTSEASCHGS. Positions 748–762 are enriched in low complexity; that stretch reads SRSSSGEGSINSRTS. The PB1 domain maps to 847–926; that stretch reads TVTIKASFKE…HVIRLLVSDV (80 aa).

It is found in the nucleus. In terms of biological role, probable transcription factor. This Oryza sativa subsp. japonica (Rice) protein is Protein NLP3 (NLP3).